Here is a 477-residue protein sequence, read N- to C-terminus: Chromosomal replication initiator protein DnaA (477 aa).

A domain I, interacts with DnaA modulators region spans residues 1–87 (MSDRSDPTHA…AGVSNFAIVV (87 aa)). Residues 87-132 (VNPEIAQDAFAQHPEPAAEQPYIETPTITAPTDNPGLPASPSRGDS) are domain II. The segment at 112–131 (PTITAPTDNPGLPASPSRGD) is disordered. The interval 133–349 (RLNPKYGFDT…GTLIRVTAFA (217 aa)) is domain III, AAA+ region. Positions 177, 179, 180, and 181 each coordinate ATP. The tract at residues 350 to 477 (SLNKTPVDLA…IKQNHRYGKM (128 aa)) is domain IV, binds dsDNA.

Belongs to the DnaA family. Oligomerizes as a right-handed, spiral filament on DNA at oriC.

Its subcellular location is the cytoplasm. Its function is as follows. Plays an essential role in the initiation and regulation of chromosomal replication. ATP-DnaA binds to the origin of replication (oriC) to initiate formation of the DNA replication initiation complex once per cell cycle. Binds the DnaA box (a 9 base pair repeat at the origin) and separates the double-stranded (ds)DNA. Forms a right-handed helical filament on oriC DNA; dsDNA binds to the exterior of the filament while single-stranded (ss)DNA is stabiized in the filament's interior. The ATP-DnaA-oriC complex binds and stabilizes one strand of the AT-rich DNA unwinding element (DUE), permitting loading of DNA polymerase. After initiation quickly degrades to an ADP-DnaA complex that is not apt for DNA replication. Binds acidic phospholipids. The polypeptide is Chromosomal replication initiator protein DnaA (Clavibacter michiganensis subsp. michiganensis (strain NCPPB 382)).